The chain runs to 221 residues: LHFPL tetraspan subfamily member 5 protein (221 aa).

Residues 1-24 (MPKLLPAQEAARIYHTNYVRNARA) are Cytoplasmic-facing. The chain crosses the membrane as a helical span at residues 25–45 (MGVLWALFTLCFSILMVVTFI). The Extracellular portion of the chain corresponds to 46–98 (QPYWIGDSIDTPQAGYFGLFSYCIGNALTGELICKGSPLDFGTIPSSAFKTAM). The chain crosses the membrane as a helical span at residues 99 to 119 (FFVGISTFLIIGSILCFSLFF). The Cytoplasmic segment spans residues 120–128 (FCNAATVYK). Residues 129–149 (VCAWMQLAAATGLMIGCLIYP) form a helical membrane-spanning segment. Residues 150-179 (DGWDSSEVKRMCGDKTDKYTLGACTVRWAY) are Extracellular-facing. Residues 180 to 200 (ILCIIGILDALILSFLAFVLG) form a helical membrane-spanning segment. Over 201–221 (NRQDNLLPSDFKVESKEEGNE) the chain is Cytoplasmic.

The protein belongs to the LHFP family.

The protein localises to the cell membrane. Its function is as follows. Probable component of the mechanotransducer (MET) non-specific cation channel complex. In Gallus gallus (Chicken), this protein is LHFPL tetraspan subfamily member 5 protein.